Here is a 165-residue protein sequence, read N- to C-terminus: 6,7-dimethyl-8-ribityllumazine synthase (165 aa).

5-amino-6-(D-ribitylamino)uracil is bound by residues tryptophan 26, 57–59 (SVE), and 79–81 (VVV). 84–85 (AT) is a binding site for (2S)-2-hydroxy-3-oxobutyl phosphate. Histidine 87 (proton donor) is an active-site residue. Residue histidine 112 participates in 5-amino-6-(D-ribitylamino)uracil binding. Residue arginine 126 coordinates (2S)-2-hydroxy-3-oxobutyl phosphate.

This sequence belongs to the DMRL synthase family.

It carries out the reaction (2S)-2-hydroxy-3-oxobutyl phosphate + 5-amino-6-(D-ribitylamino)uracil = 6,7-dimethyl-8-(1-D-ribityl)lumazine + phosphate + 2 H2O + H(+). It participates in cofactor biosynthesis; riboflavin biosynthesis; riboflavin from 2-hydroxy-3-oxobutyl phosphate and 5-amino-6-(D-ribitylamino)uracil: step 1/2. Functionally, catalyzes the formation of 6,7-dimethyl-8-ribityllumazine by condensation of 5-amino-6-(D-ribitylamino)uracil with 3,4-dihydroxy-2-butanone 4-phosphate. This is the penultimate step in the biosynthesis of riboflavin. The chain is 6,7-dimethyl-8-ribityllumazine synthase from Salinispora arenicola (strain CNS-205).